We begin with the raw amino-acid sequence, 517 residues long: MGNCLTTQKGEPDKPADRIKLDDPPTIGVGVGVPQIPMPSHAGQPPEQIRPVPQIPESETAGANAKIFVALYDYDARTDEDLSFRKGEHLEILNDTQGDWWLARSKKTRSEGYIPSNYVAKLKSIEAEPWYFRKIKRIEAEKKLLLPENEHGAFLIRDSESRHNDYSLSVRDGDTVKHYRIRQLDEGGFFIARRTTFRTLQELVEHYSKDSDGLCVNLCKPCVQIEKPVTEGLSHRTRDQWEIDRTSLKFVRKLGSGQFGDVWEGLWNNTTPVAIKTLKSGTMDPKDFLAEAQIMKKLRHTKLIQLYAVCTVEEPIYIITELMKHGSLLEYLQAIAGKGRSLKMQTLIDMAAQIAAGMAYLESQNYIHRDLAARNVLVGDGNIVKIADFGLARLIKEDEYEARVGARFPIKWTAPEAANYSKFSIKSDVWSFGILLTELVTYGRIPYPGMTNAEVLTQVEHGYRMPQPPNCEPRLYEIMLECWHKDPMRRPTFETLQWKLEDFYTSDQSDYKEAQAY.

Residues 1 to 47 form a disordered region; the sequence is MGNCLTTQKGEPDKPADRIKLDDPPTIGVGVGVPQIPMPSHAGQPPE. Basic and acidic residues predominate over residues 10–23; it reads GEPDKPADRIKLDD. One can recognise an SH3 domain in the interval 63–124; it reads ANAKIFVALY…PSNYVAKLKS (62 aa). An SH2 domain is found at 130 to 222; sequence WYFRKIKRIE…GLCVNLCKPC (93 aa). A Protein kinase domain is found at 248–504; the sequence is LKFVRKLGSG…TLQWKLEDFY (257 aa). ATP-binding positions include 254–262 and K276; that span reads LGSGQFGDV. Residue D370 is the Proton acceptor of the active site.

This sequence belongs to the protein kinase superfamily. Tyr protein kinase family. SRC subfamily. Ubiquitous in early embryos, in stages 13-16 expression is seen in visceral mesoderm, hindgut, brain, anal pads and ventral ganglions. In larvae, expression is in CNS, wing disk, leg disk and photoreceptor precursors in the eye-antenna disks posterior to the morphogenetic furrow.

It catalyses the reaction L-tyrosyl-[protein] + ATP = O-phospho-L-tyrosyl-[protein] + ADP + H(+). Functionally, required directly or indirectly for the phosphorylation of drpr which is necessary for the interaction of drpr with shark and subsequent glial phagocytic activity. Together with drpr and shark, promotes the migration of macrophages to sites of wounding as part of a signaling cascade where Src42A detects production of hydrogen peroxide at wound sites which triggers phosphorylation of drpr and subsequent recruitment and activation of shark. Essential for correct eye morphogenesis (ommatidial R7 neuron formation) which requires the Ras1/MAPK signal transduction pathway. May be involved in the regulation of cytoskeleton organization and cell-cell contacts in developing ommatidia. Involved in phosphorylation of Dscam1, a cell surface receptor involved in targeting of growing axons during eye morphogenesis, and its interaction partner the SH2/SH3 adapter protein dock/dreadlocks. During embryogenesis, involved in regulation of dorsal closure where it may have a role in activating the JNK pathway in leading edge cells during this process. The polypeptide is Tyrosine-protein kinase Src42A (Drosophila melanogaster (Fruit fly)).